The chain runs to 364 residues: Anthranilate phosphoribosyltransferase (364 aa).

5-phospho-alpha-D-ribose 1-diphosphate is bound by residues G101, 104–105, T109, 111–114, 129–137, and G141; these read GD, NLST, and KHGNRAASS. G101 is a binding site for anthranilate. S113 contributes to the Mg(2+) binding site. N132 is an anthranilate binding site. R187 is a binding site for anthranilate. Mg(2+) is bound by residues D245 and E246.

It belongs to the anthranilate phosphoribosyltransferase family. As to quaternary structure, homodimer. It depends on Mg(2+) as a cofactor.

The enzyme catalyses N-(5-phospho-beta-D-ribosyl)anthranilate + diphosphate = 5-phospho-alpha-D-ribose 1-diphosphate + anthranilate. The protein operates within amino-acid biosynthesis; L-tryptophan biosynthesis; L-tryptophan from chorismate: step 2/5. In terms of biological role, catalyzes the transfer of the phosphoribosyl group of 5-phosphorylribose-1-pyrophosphate (PRPP) to anthranilate to yield N-(5'-phosphoribosyl)-anthranilate (PRA). The chain is Anthranilate phosphoribosyltransferase from Mycolicibacterium gilvum (strain PYR-GCK) (Mycobacterium gilvum (strain PYR-GCK)).